A 154-amino-acid chain; its full sequence is SsrA-binding protein (154 aa).

The protein belongs to the SmpB family.

Its subcellular location is the cytoplasm. Functionally, required for rescue of stalled ribosomes mediated by trans-translation. Binds to transfer-messenger RNA (tmRNA), required for stable association of tmRNA with ribosomes. tmRNA and SmpB together mimic tRNA shape, replacing the anticodon stem-loop with SmpB. tmRNA is encoded by the ssrA gene; the 2 termini fold to resemble tRNA(Ala) and it encodes a 'tag peptide', a short internal open reading frame. During trans-translation Ala-aminoacylated tmRNA acts like a tRNA, entering the A-site of stalled ribosomes, displacing the stalled mRNA. The ribosome then switches to translate the ORF on the tmRNA; the nascent peptide is terminated with the 'tag peptide' encoded by the tmRNA and targeted for degradation. The ribosome is freed to recommence translation, which seems to be the essential function of trans-translation. This is SsrA-binding protein from Solidesulfovibrio magneticus (strain ATCC 700980 / DSM 13731 / RS-1) (Desulfovibrio magneticus).